A 525-amino-acid chain; its full sequence is Probable bifunctional tRNA threonylcarbamoyladenosine biosynthesis protein (525 aa).

The kae1 stretch occupies residues 1–322; that stretch reads MPEKRVLGIE…FRSDQVEVTW (322 aa). Residues histidine 106, histidine 110, and tyrosine 127 each coordinate Fe cation. L-threonylcarbamoyladenylate contacts are provided by residues 127 to 131, aspartate 159, glycine 172, glutamate 176, and asparagine 255; that span reads YASGA. Aspartate 283 provides a ligand contact to Fe cation. The region spanning 331 to 525 is the Protein kinase domain; the sequence is APGQSETAER…HEIELRGRYL (195 aa). Residues 338–346 and lysine 355 contribute to the ATP site; that span reads AERGAEASV. The active-site Proton acceptor; for kinase activity is the aspartate 442.

This sequence in the N-terminal section; belongs to the KAE1 / TsaD family. It in the C-terminal section; belongs to the protein kinase superfamily. Tyr protein kinase family. BUD32 subfamily. In terms of assembly, component of the KEOPS complex that consists of Kae1, Bud32, Cgi121 and Pcc1; the whole complex dimerizes. Requires Fe(2+) as cofactor.

It localises to the cytoplasm. The catalysed reaction is L-seryl-[protein] + ATP = O-phospho-L-seryl-[protein] + ADP + H(+). The enzyme catalyses L-threonyl-[protein] + ATP = O-phospho-L-threonyl-[protein] + ADP + H(+). It catalyses the reaction L-threonylcarbamoyladenylate + adenosine(37) in tRNA = N(6)-L-threonylcarbamoyladenosine(37) in tRNA + AMP + H(+). Its function is as follows. Required for the formation of a threonylcarbamoyl group on adenosine at position 37 (t(6)A37) in tRNAs that read codons beginning with adenine. Is a component of the KEOPS complex that is probably involved in the transfer of the threonylcarbamoyl moiety of threonylcarbamoyl-AMP (TC-AMP) to the N6 group of A37. The Kae1 domain likely plays a direct catalytic role in this reaction. The Bud32 domain probably displays kinase activity that regulates Kae1 function. The polypeptide is Probable bifunctional tRNA threonylcarbamoyladenosine biosynthesis protein (Methanocorpusculum labreanum (strain ATCC 43576 / DSM 4855 / Z)).